We begin with the raw amino-acid sequence, 197 residues long: Holliday junction branch migration complex subunit RuvA (197 aa).

The segment at 1 to 64 is domain I; it reads MIGRLRGIVA…EDSVSLYGFL (64 aa). The interval 65-143 is domain II; the sequence is REGERRLFRD…QFGAGGALPT (79 aa). The tract at residues 144–153 is flexible linker; the sequence is GSGPAPADPL. The segment at 153–197 is domain III; sequence LSDATVALQQLGYKPAEAARMAREAFNEGDEVAIVIRKALQSALR.

This sequence belongs to the RuvA family. In terms of assembly, homotetramer. Forms an RuvA(8)-RuvB(12)-Holliday junction (HJ) complex. HJ DNA is sandwiched between 2 RuvA tetramers; dsDNA enters through RuvA and exits via RuvB. An RuvB hexamer assembles on each DNA strand where it exits the tetramer. Each RuvB hexamer is contacted by two RuvA subunits (via domain III) on 2 adjacent RuvB subunits; this complex drives branch migration. In the full resolvosome a probable DNA-RuvA(4)-RuvB(12)-RuvC(2) complex forms which resolves the HJ.

Its subcellular location is the cytoplasm. In terms of biological role, the RuvA-RuvB-RuvC complex processes Holliday junction (HJ) DNA during genetic recombination and DNA repair, while the RuvA-RuvB complex plays an important role in the rescue of blocked DNA replication forks via replication fork reversal (RFR). RuvA specifically binds to HJ cruciform DNA, conferring on it an open structure. The RuvB hexamer acts as an ATP-dependent pump, pulling dsDNA into and through the RuvAB complex. HJ branch migration allows RuvC to scan DNA until it finds its consensus sequence, where it cleaves and resolves the cruciform DNA. The protein is Holliday junction branch migration complex subunit RuvA of Stenotrophomonas maltophilia (strain R551-3).